Here is a 122-residue protein sequence, read N- to C-terminus: MIQPQTYLNVADNSGARKLMCIRVLGGGNRRYGFIGDKIIAVVKDATPNMAVKKSDVVEAVIVRTRKAVSRDSGMSIRFDDNAAVIINKDGNPRGTRVFGPVARELRDKNFTKIVSLAPEVL.

Belongs to the universal ribosomal protein uL14 family. As to quaternary structure, part of the 50S ribosomal subunit. Forms a cluster with proteins L3 and L19. In the 70S ribosome, L14 and L19 interact and together make contacts with the 16S rRNA in bridges B5 and B8.

In terms of biological role, binds to 23S rRNA. Forms part of two intersubunit bridges in the 70S ribosome. The protein is Large ribosomal subunit protein uL14 of Nostoc punctiforme (strain ATCC 29133 / PCC 73102).